Here is a 344-residue protein sequence, read N- to C-terminus: N-acetyl-gamma-glutamyl-phosphate reductase (344 aa).

Residue cysteine 150 is part of the active site.

The protein belongs to the NAGSA dehydrogenase family. Type 1 subfamily.

The protein localises to the cytoplasm. It catalyses the reaction N-acetyl-L-glutamate 5-semialdehyde + phosphate + NADP(+) = N-acetyl-L-glutamyl 5-phosphate + NADPH + H(+). It functions in the pathway amino-acid biosynthesis; L-arginine biosynthesis; N(2)-acetyl-L-ornithine from L-glutamate: step 3/4. Catalyzes the NADPH-dependent reduction of N-acetyl-5-glutamyl phosphate to yield N-acetyl-L-glutamate 5-semialdehyde. The polypeptide is N-acetyl-gamma-glutamyl-phosphate reductase (Pseudomonas fluorescens (strain SBW25)).